The sequence spans 419 residues: UDP-N-acetylglucosamine 1-carboxyvinyltransferase (419 aa).

22–23 (KN) provides a ligand contact to phosphoenolpyruvate. R91 is a UDP-N-acetyl-alpha-D-glucosamine binding site. The active-site Proton donor is the C115. 2-(S-cysteinyl)pyruvic acid O-phosphothioketal is present on C115. Residues 120 to 124 (RPVDL), 160 to 163 (KVSV), D305, and V327 each bind UDP-N-acetyl-alpha-D-glucosamine.

Belongs to the EPSP synthase family. MurA subfamily.

It is found in the cytoplasm. It carries out the reaction phosphoenolpyruvate + UDP-N-acetyl-alpha-D-glucosamine = UDP-N-acetyl-3-O-(1-carboxyvinyl)-alpha-D-glucosamine + phosphate. Its pathway is cell wall biogenesis; peptidoglycan biosynthesis. Its function is as follows. Cell wall formation. Adds enolpyruvyl to UDP-N-acetylglucosamine. This Salmonella dublin (strain CT_02021853) protein is UDP-N-acetylglucosamine 1-carboxyvinyltransferase.